The following is a 286-amino-acid chain: Hypersensitive-induced response protein 1 (286 aa).

Gly2 is lipidated: N-myristoyl glycine. A coiled-coil region spans residues 114-190; it reads LDDVFEQKND…EKILQIKRAE (77 aa).

As to quaternary structure, self-interacts and forms heteromers. Interacts with NB-LRR class of R proteins before R proteins (e.g. RPS2 or RPM1) are activated by the effectors. Interacts with LRR1.

It localises to the cell membrane. Positive regulator of hypersensitive response (HR)-like cell death. May be involved in potassium ion channel regulation. The polypeptide is Hypersensitive-induced response protein 1 (Arabidopsis thaliana (Mouse-ear cress)).